The chain runs to 970 residues: Probable histidine kinase 6 (970 aa).

Residues 1-12 (MGKPEARSGWRN) are Cytoplasmic-facing. The chain crosses the membrane as a helical span at residues 13–33 (AAAAAWVLVAVACAAYMHWHL). Topologically, residues 34–306 (RRETMDRAEE…YRQKPPLPWS (273 aa)) are extracellular. The region spanning 82–294 (FPSAIDQDTF…GDPFRAHEMR (213 aa)) is the CHASE domain. A helical membrane pass occupies residues 307–327 (AITNPLGTFVIWMLVGYIICA). The Cytoplasmic portion of the chain corresponds to 328 to 970 (AWSRYDKVSE…LVVGTKESAV (643 aa)). The 290-residue stretch at 362 to 651 (TVSHEIRTPM…TFTFSAVLKR (290 aa)) folds into the Histidine kinase domain. Histidine 365 bears the Phosphohistidine; by autocatalysis mark. Response regulatory domains are found at residues 676–802 (KAIL…QQLL) and 827–962 (NILI…SRLV). At aspartate 877 the chain carries 4-aspartylphosphate.

Post-translationally, activation probably requires a transfer of a phosphate group between a His in the transmitter domain and an Asp of the receiver domain. Highly expressed in spikelets and at lower levels in roots, young leaves, mature leaves and stems.

The protein resides in the cell membrane. The enzyme catalyses ATP + protein L-histidine = ADP + protein N-phospho-L-histidine.. Cytokinin receptor related to bacterial two-component regulators. Functions as a histidine kinase and transmits the stress signal to a downstream MAPK cascade. This chain is Probable histidine kinase 6, found in Oryza sativa subsp. japonica (Rice).